A 634-amino-acid polypeptide reads, in one-letter code: Kelch-like protein 22 (634 aa).

An N-acetylalanine modification is found at A2. One can recognise a BTB domain in the interval 50-117; sequence FDVVLVVEGK…IYTSELELSL (68 aa). Kelch repeat units lie at residues 299–349, 350–399, 400–446, 448–493, 495–544, and 545–593; these read CVVG…VLNN, FVYL…VVGK, YIYA…TLQG, MYIT…ALLD, LFVI…VLDS, and RIYV…VLTL. Phosphothreonine is present on T463. A Phosphotyrosine modification is found at Y466. T475 is subject to Phosphothreonine. The tract at residues 600–634 is disordered; sequence EQPRGTPNRSQADADFASEVMSVSDWEEFDNSSED. A Phosphothreonine modification is found at T605. Residues 624–634 are compositionally biased toward acidic residues; the sequence is DWEEFDNSSED.

Component of the BCR(KLHL22) E3 ubiquitin ligase complex, at least composed of CUL3, KLHL22 and RBX1. Interacts with PLK1. Interacts with DEPDC5 (via DEP domain); the interaction depends on amino acid availability. Interacts with YWHAE; required for the nuclear localization of KLHL22 upon amino acid starvation.

It is found in the cytoplasm. Its subcellular location is the cytosol. The protein resides in the cytoskeleton. The protein localises to the microtubule organizing center. It localises to the centrosome. It is found in the spindle. Its subcellular location is the nucleus. The protein resides in the lysosome. The protein operates within protein modification; protein ubiquitination. In terms of biological role, substrate-specific adapter of a BCR (BTB-CUL3-RBX1) E3 ubiquitin ligase complex required for chromosome alignment and localization of PLK1 at kinetochores. The BCR(KLHL22) ubiquitin ligase complex mediates monoubiquitination of PLK1, leading to PLK1 dissociation from phosphoreceptor proteins and subsequent removal from kinetochores, allowing silencing of the spindle assembly checkpoint (SAC) and chromosome segregation. Monoubiquitination of PLK1 does not lead to PLK1 degradation. The BCR(KLHL22) ubiquitin ligase complex is also responsible for the amino acid-stimulated 'Lys-48' polyubiquitination and proteasomal degradation of DEPDC5. Through the degradation of DEPDC5, releases the GATOR1 complex-mediated inhibition of the TORC1 pathway. It is therefore an amino acid-dependent activator within the amino acid-sensing branch of the TORC1 pathway, indirectly regulating different cellular processes including cell growth and autophagy. The polypeptide is Kelch-like protein 22 (Mus musculus (Mouse)).